Here is a 66-residue protein sequence, read N- to C-terminus: Beta-toxin Chui3 (66 aa).

The region spanning 1–66 (KEGYLVELGT…VWPLKNKTCR (66 aa)) is the LCN-type CS-alpha/beta domain. 4 disulfide bridges follow: Cys-12–Cys-65, Cys-16–Cys-41, Cys-25–Cys-46, and Cys-29–Cys-48.

The protein belongs to the long (4 C-C) scorpion toxin superfamily. Sodium channel inhibitor family. Beta subfamily. Expressed by the venom gland.

The protein resides in the secreted. Beta toxins bind voltage-independently at site-4 of sodium channels (Nav) and shift the voltage of activation toward more negative potentials thereby affecting sodium channel activation and promoting spontaneous and repetitive firing. Acts on human sodium channel Nav1.6/SCN8A. The sequence is that of Beta-toxin Chui3 from Centruroides huichol (Scorpion).